The chain runs to 548 residues: Glucose-6-phosphate isomerase (548 aa).

Glu-355 functions as the Proton donor in the catalytic mechanism. Catalysis depends on residues His-386 and Lys-511.

Belongs to the GPI family.

It localises to the cytoplasm. It carries out the reaction alpha-D-glucose 6-phosphate = beta-D-fructose 6-phosphate. It functions in the pathway carbohydrate biosynthesis; gluconeogenesis. Its pathway is carbohydrate degradation; glycolysis; D-glyceraldehyde 3-phosphate and glycerone phosphate from D-glucose: step 2/4. In terms of biological role, catalyzes the reversible isomerization of glucose-6-phosphate to fructose-6-phosphate. The sequence is that of Glucose-6-phosphate isomerase from Wigglesworthia glossinidia brevipalpis.